The following is a 323-amino-acid chain: Biotin synthase (323 aa).

The region spanning 46 to 264 (TEIQLSSLLS…IAVARITMPR (219 aa)) is the Radical SAM core domain. Residues Cys61, Cys65, and Cys68 each coordinate [4Fe-4S] cluster. [2Fe-2S] cluster is bound by residues Cys105, Cys136, Cys196, and Arg268.

Belongs to the radical SAM superfamily. Biotin synthase family. In terms of assembly, homodimer. [4Fe-4S] cluster serves as cofactor. The cofactor is [2Fe-2S] cluster.

The enzyme catalyses (4R,5S)-dethiobiotin + (sulfur carrier)-SH + 2 reduced [2Fe-2S]-[ferredoxin] + 2 S-adenosyl-L-methionine = (sulfur carrier)-H + biotin + 2 5'-deoxyadenosine + 2 L-methionine + 2 oxidized [2Fe-2S]-[ferredoxin]. It participates in cofactor biosynthesis; biotin biosynthesis; biotin from 7,8-diaminononanoate: step 2/2. Its function is as follows. Catalyzes the conversion of dethiobiotin (DTB) to biotin by the insertion of a sulfur atom into dethiobiotin via a radical-based mechanism. In Bordetella avium (strain 197N), this protein is Biotin synthase.